The chain runs to 231 residues: MSNTPIELKGSSFTLSVVHLHEAEPKVIHQALEDKIAQAPAFLKHAPVVLNVSALEDPVNWSAMHKAVSATGLRVIGVSGCKDAQLKAEIEKMGLPILTEGKEKAPRPAPAPQAPAQNTTPVTKTRLIDTPVRSGQRIYAPQCDLIVTSHVSAGAELIADGNIHVYGMMRGRALAGASGDRETQIFCTNLMAELVSIAGEYWLSDQIPAEFYGKAARLQLVENALTVQPLN.

Residues 102-125 (KEKAPRPAPAPQAPAQNTTPVTKT) form a disordered region.

This sequence belongs to the MinC family. As to quaternary structure, interacts with MinD and FtsZ.

Cell division inhibitor that blocks the formation of polar Z ring septums. Rapidly oscillates between the poles of the cell to destabilize FtsZ filaments that have formed before they mature into polar Z rings. Prevents FtsZ polymerization. This chain is Probable septum site-determining protein MinC, found in Escherichia coli O139:H28 (strain E24377A / ETEC).